The primary structure comprises 106 residues: ATP-dependent Clp protease adapter protein ClpS (106 aa).

The span at 1 to 13 (MGNNSTWSQSENL) shows a compositional bias: polar residues. The segment at 1 to 21 (MGNNSTWSQSENLTADKQKEK) is disordered.

The protein belongs to the ClpS family. In terms of assembly, binds to the N-terminal domain of the chaperone ClpA.

Functionally, involved in the modulation of the specificity of the ClpAP-mediated ATP-dependent protein degradation. In Pectobacterium carotovorum subsp. carotovorum (strain PC1), this protein is ATP-dependent Clp protease adapter protein ClpS.